Here is a 207-residue protein sequence, read N- to C-terminus: MAKYVGPKLKLSRRENTDLFLKSGIRSIDSKCQFDHAPGQHSIRKSRLSDYGVQLREKQKVKRMYGILENQFANYYRKSASMKGNTGEILLQLLESRLDNVVYRMGFGSTRAESRQLVSHKSIIVNDCIVNIASYQVVPNTVIQVYKKSHNQSRIYAALEIAEQQRESVPWIEVDSAKLKGIFKRRPERSELSANINEHLIVELYSK.

Residues 96 to 156 enclose the S4 RNA-binding domain; that stretch reads SRLDNVVYRM…KKSHNQSRIY (61 aa).

Belongs to the universal ribosomal protein uS4 family. In terms of assembly, part of the 30S ribosomal subunit. Contacts protein S5. The interaction surface between S4 and S5 is involved in control of translational fidelity.

Its function is as follows. One of the primary rRNA binding proteins, it binds directly to 16S rRNA where it nucleates assembly of the body of the 30S subunit. Functionally, with S5 and S12 plays an important role in translational accuracy. This is Small ribosomal subunit protein uS4 from Blochmanniella floridana.